The chain runs to 94 residues: Large ribosomal subunit protein eL43B (94 aa).

A C4-type zinc finger spans residues 39-62 (CPFCGRLTVKRTAAGIWKCSGKGC).

Belongs to the eukaryotic ribosomal protein eL43 family. In terms of assembly, component of the large ribosomal subunit (LSU). Mature yeast ribosomes consist of a small (40S) and a large (60S) subunit. The 40S small subunit contains 1 molecule of ribosomal RNA (18S rRNA) and at least 33 different proteins. The large 60S subunit contains 3 rRNA molecules (25S, 5.8S and 5S rRNA) and at least 46 different proteins.

It localises to the cytoplasm. In terms of biological role, component of the ribosome, a large ribonucleoprotein complex responsible for the synthesis of proteins in the cell. The small ribosomal subunit (SSU) binds messenger RNAs (mRNAs) and translates the encoded message by selecting cognate aminoacyl-transfer RNA (tRNA) molecules. The large subunit (LSU) contains the ribosomal catalytic site termed the peptidyl transferase center (PTC), which catalyzes the formation of peptide bonds, thereby polymerizing the amino acids delivered by tRNAs into a polypeptide chain. The nascent polypeptides leave the ribosome through a tunnel in the LSU and interact with protein factors that function in enzymatic processing, targeting, and the membrane insertion of nascent chains at the exit of the ribosomal tunnel. This Schizosaccharomyces pombe (strain 972 / ATCC 24843) (Fission yeast) protein is Large ribosomal subunit protein eL43B (rpl4302).